The sequence spans 163 residues: Nucleotide-binding protein LA_3406 (163 aa).

The protein belongs to the YajQ family.

Functionally, nucleotide-binding protein. This Leptospira interrogans serogroup Icterohaemorrhagiae serovar Lai (strain 56601) protein is Nucleotide-binding protein LA_3406.